The sequence spans 120 residues: Large ribosomal subunit protein uL18 (120 aa).

Basic and acidic residues predominate over residues 1 to 10 (MSTPRKEQTQ). A disordered region spans residues 1–25 (MSTPRKEQTQKRHRRLRRHLEGTPE).

Belongs to the universal ribosomal protein uL18 family. As to quaternary structure, part of the 50S ribosomal subunit; part of the 5S rRNA/L5/L18/L25 subcomplex. Contacts the 5S and 23S rRNAs.

This is one of the proteins that bind and probably mediate the attachment of the 5S RNA into the large ribosomal subunit, where it forms part of the central protuberance. The sequence is that of Large ribosomal subunit protein uL18 from Synechococcus sp. (strain RCC307).